A 266-amino-acid chain; its full sequence is Respiratory nitrate reductase beta chain (266 aa).

2 4Fe-4S ferredoxin-type domains span residues 3 to 32 (VGMV…AWFN) and 30 to 61 (WFNN…KREE). Residues C12, C15, C18, C22, C39, C42, and C47 each coordinate [4Fe-4S] cluster. [3Fe-4S] cluster contacts are provided by C51 and C73. Positions 77, 81, 84, 96, and 100 each coordinate [4Fe-4S] cluster.

As to quaternary structure, heterotrimer composed of an alpha, a beta and a gamma chain. Alpha and beta are catalytic chains; gamma chains are involved in binding the enzyme complex to the cytoplasmic membrane. It depends on [4Fe-4S] cluster as a cofactor. Requires [3Fe-4S] cluster as cofactor.

Its subcellular location is the cell membrane. The protein localises to the cytoplasm. It catalyses the reaction nitrate + a quinol = a quinone + nitrite + H2O. With respect to regulation, inhibited by micromolar concentrations of azide. In terms of biological role, the nitrate reductase enzyme complex allows Bradyrhizobium sp. USDA 3045 to use nitrate as an electron acceptor during anaerobic growth. The beta chain is an electron transfer unit containing four cysteine clusters involved in the formation of iron-sulfur centers. Electrons are transferred from the gamma chain to the molybdenum cofactor of the alpha subunit. The chain is Respiratory nitrate reductase beta chain (narH) from Bradyrhizobium sp.